A 290-amino-acid polypeptide reads, in one-letter code: Arginine and glutamate-rich protein 1 (290 aa).

Positions 1–10 are enriched in polar residues; the sequence is MGSRSRTPSP. Disordered stretches follow at residues 1-137, 193-216, and 249-290; these read MGSR…AKEL, ERRR…KREE, and MDEE…PGAL. Residues 12-28 are compositionally biased toward basic residues; it reads GKRRHHKSKHKKRSKSH. Basic and acidic residues-rich tracts occupy residues 29-44 and 53-76; these read HDHE…DKSS and RERD…DYRH. Phosphoserine occurs at positions 77 and 79. The segment covering 88–99 has biased composition (low complexity); that stretch reads SSSSSDSQYSEQ. A coiled-coil region spans residues 111-269; the sequence is FKKLDEQNQM…QEKRVKEEQK (159 aa). Positions 124 to 137 are enriched in basic and acidic residues; it reads RLAEMERQRRAKEL. Over residues 249 to 269 the composition is skewed to basic and acidic residues; it reads MDEERQRMRKEQEKRVKEEQK.

The protein belongs to the ARGLU1 family. Associates with the U1-snRNP complex; the interaction is enhanced by binding of Arglu1 to a stable intronic sequence RNA (sisRNA) produced from the Arglu1 gene by premature cleavage.

It localises to the nucleus. The protein localises to the nucleus speckle. Functionally, post-transcriptional regulator of gene expression; modulates splicing and premature cleavage at cryptic polyadenylation sites of its own pre-mRNA through binding and regulation of the U1-snRNP complex. The chain is Arginine and glutamate-rich protein 1 from Drosophila melanogaster (Fruit fly).